The chain runs to 340 residues: Phenylalanine--tRNA ligase alpha subunit (340 aa).

Glu-258 contacts Mg(2+).

Belongs to the class-II aminoacyl-tRNA synthetase family. Phe-tRNA synthetase alpha subunit type 1 subfamily. Tetramer of two alpha and two beta subunits. Mg(2+) serves as cofactor.

It is found in the cytoplasm. It carries out the reaction tRNA(Phe) + L-phenylalanine + ATP = L-phenylalanyl-tRNA(Phe) + AMP + diphosphate + H(+). The polypeptide is Phenylalanine--tRNA ligase alpha subunit (Corynebacterium efficiens (strain DSM 44549 / YS-314 / AJ 12310 / JCM 11189 / NBRC 100395)).